A 433-amino-acid chain; its full sequence is Histidine--tRNA ligase (433 aa).

This sequence belongs to the class-II aminoacyl-tRNA synthetase family. Homodimer.

It is found in the cytoplasm. It catalyses the reaction tRNA(His) + L-histidine + ATP = L-histidyl-tRNA(His) + AMP + diphosphate + H(+). In Pseudothermotoga lettingae (strain ATCC BAA-301 / DSM 14385 / NBRC 107922 / TMO) (Thermotoga lettingae), this protein is Histidine--tRNA ligase.